We begin with the raw amino-acid sequence, 517 residues long: Nuclear receptor subfamily 5 group A member 2 (517 aa).

A DNA-binding region (nuclear receptor) is located at residues 43–118; that stretch reads DEMCPVCGDK…VGMKLEAVRA (76 aa). The Zn(2+) site is built by Cys46, Cys49, Cys63, Cys66, Cys82, Cys88, Cys98, and Cys101. NR C4-type zinc fingers lie at residues 46 to 66 and 82 to 101; these read CPVCGDKVSGYHYGLLTCESC and CIENQSCQIDKTQRKRCPYC. The segment at 112–127 is C-terminal extension (CTE); that stretch reads KLEAVRADRMRGGRNK. The FTZ-F1 box motif lies at 128–147; sequence FGPMYKRDRALKQQKKALIR. Residues 182 to 211 form a disordered region; sequence GLPLSHHHHHHHHHHHHSSSSAGLPPADFD. The span at 186 to 199 shows a compositional bias: basic residues; it reads SHHHHHHHHHHHHS. The region spanning 276–515 is the NR LBD domain; it reads SFPHLVVELL…NLLIEMLHAK (240 aa). A phospholipid derivative-binding positions include 397–400, Tyr492, and Lys496; that span reads GATL. The interval 504–515 is AF-2; it reads CNNLLIEMLHAK.

The protein belongs to the nuclear hormone receptor family. NR5 subfamily. Monomer; Binds DNA as a monomer.

The protein resides in the nucleus. The protein localises to the chromosome. Its function is as follows. Orphan nuclear receptor that binds DNA as a monomer to the 5'-TCAAGGCCA-3' sequence and controls expression of target genes: regulates key biological processes, such as cholesterol and bile acid synthesis pathways, as well as cartilage, liver and pancreas morphogenesis. Ligand-binding causes conformational change which causes recruitment of coactivators, promoting target gene activation. The specific ligand is unknown, but specific phospholipids, such as phosphatidylethanolamine, phosphatidylserine, dilauroyl phosphatidylcholine and diundecanoyl phosphatidylcholine can act as ligand in vitro. Acts as a pioneer transcription factor, which unwraps target DNA from histones and elicits local opening of closed chromatin. Involved in the formation of connective tissue in lower jaw. Lacks transcription factor activity; unable to activate expression of target genes. The chain is Nuclear receptor subfamily 5 group A member 2 from Danio rerio (Zebrafish).